Here is a 356-residue protein sequence, read N- to C-terminus: D-alanine--D-alanine ligase (356 aa).

The region spanning 134–339 is the ATP-grasp domain; it reads KQLFAHRGLP…YADLITKLIE (206 aa). 167–222 provides a ligand contact to ATP; sequence KDKLEFPVFVKPANLGSSVGISKCNNEEELKSGIEEAFQFDRKLVIEQGIEAREIE. Residues Asp293, Glu306, and Asn308 each coordinate Mg(2+).

Belongs to the D-alanine--D-alanine ligase family. Mg(2+) serves as cofactor. Mn(2+) is required as a cofactor.

It localises to the cytoplasm. The enzyme catalyses 2 D-alanine + ATP = D-alanyl-D-alanine + ADP + phosphate + H(+). It participates in cell wall biogenesis; peptidoglycan biosynthesis. In terms of biological role, cell wall formation. The polypeptide is D-alanine--D-alanine ligase (Staphylococcus carnosus (strain TM300)).